A 430-amino-acid polypeptide reads, in one-letter code: Alpha-(1-&gt;3)-arabinofuranosyltransferase (430 aa).

10 consecutive transmembrane segments (helical) span residues alanine 26–isoleucine 46, tryptophan 114–phenylalanine 134, tyrosine 136–valine 156, leucine 160–leucine 180, alanine 194–leucine 214, phenylalanine 218–leucine 238, tryptophan 276–leucine 296, phenylalanine 307–glycine 327, tryptophan 352–tryptophan 372, and tyrosine 381–phenylalanine 401.

Belongs to the glycosyltransferase 87 family.

Its subcellular location is the cell membrane. It carries out the reaction Adds an alpha-D-arabinofuranosyl group from trans,octacis-decaprenylphospho-beta-D-arabinofuranose at the 3-O-position of an alpha-(1-&gt;5)-arabinofuranan chain attached to a beta-(1-&gt;5)-galactofuranan chain.. The protein operates within cell wall biogenesis; cell wall polysaccharide biosynthesis. Its function is as follows. Involved in the biosynthesis of the arabinogalactan (AG) region of the mycolylarabinogalactan-peptidoglycan (mAGP) complex, an essential component of the mycobacterial cell wall. Catalyzes the addition of an arabinofuranosyl (Araf) residue from the sugar donor beta-D-arabinofuranosyl-1-monophosphoryldecaprenol (DPA) on the C-3 of an alpha-(1-&gt;5)-linked Araf from the arabinan backbone of AG. In Mycolicibacterium smegmatis (strain ATCC 700084 / mc(2)155) (Mycobacterium smegmatis), this protein is Alpha-(1-&gt;3)-arabinofuranosyltransferase (aftC).